Here is a 381-residue protein sequence, read N- to C-terminus: Phosphatidyl-myo-inositol mannosyltransferase (381 aa).

Residues tyrosine 9 and glycine 16 each coordinate GDP-alpha-D-mannose. A 1,2-diacyl-sn-glycero-3-phospho-(1D-myo-inositol)-binding positions include glutamine 18, 69 to 70, and arginine 75; that span reads FN. GDP-alpha-D-mannose is bound by residues arginine 204, 209 to 210, 251 to 253, arginine 256, 274 to 278, and glutamate 282; these read RK, LDD, and ESFGI.

It belongs to the glycosyltransferase group 1 family. Glycosyltransferase 4 subfamily. Monomer. Mg(2+) serves as cofactor.

The protein localises to the cell membrane. It carries out the reaction a 1,2-diacyl-sn-glycero-3-phospho-(1D-myo-inositol) + GDP-alpha-D-mannose = a 1,2-diacyl-sn-glycero-3-phospho-[alpha-D-mannopyranosyl-(1&lt;-&gt;6)-D-myo-inositol] + GDP + H(+). It participates in phospholipid metabolism; phosphatidylinositol metabolism. Involved in the biosynthesis of phosphatidyl-myo-inositol mannosides (PIM) which are early precursors in the biosynthesis of lipomannans (LM) and lipoarabinomannans (LAM). Catalyzes the addition of a mannosyl residue from GDP-D-mannose (GDP-Man) to the position 2 of the carrier lipid phosphatidyl-myo-inositol (PI) to generate a phosphatidyl-myo-inositol bearing an alpha-1,2-linked mannose residue (PIM1). This chain is Phosphatidyl-myo-inositol mannosyltransferase, found in Propionibacterium freudenreichii subsp. shermanii (strain ATCC 9614 / DSM 4902 / CIP 103027 / NCIMB 8099 / CIRM-BIA1).